The sequence spans 394 residues: MAEIKNYYFSSESVTEGHPDKICDAVSDAVLDECLKQDPNSRVACETLAKTGMIMIAGEITTKAKLDYQKIARDTVRRIGYTSSDMGFDADTCAVMESIAEQSPDIDMGVSAGKGLFNSESSNVSEGAGDQGIMFGYAINETETFMPLTIHLAHRLAERLTKVRKDKVVDYLRPDGKSQVTVEYKDGKAARIEAVVISTQHAAGVDHKQIEADIKKYVINEICPANMLDSNTKYYINPTGSFVVGGPMGDCGLTGRKIIVDSYGGHGAHGGGAFSGKDPTKVDRSACYMARYVAKNIVASGIADRALVQFAYAIGVPEPLSVYVNTFGTAKVHDEVLANIVSKELDLTPAGIIKRLDLRRPIYEKTTAYGHFGRELPEFTWEKTDIKDLFANAK.

His18 lines the ATP pocket. Residue Asp20 participates in Mg(2+) binding. Residue Glu46 coordinates K(+). The L-methionine site is built by Glu59 and Gln102. The interval 102-112 (QSPDIDMGVSA) is flexible loop. Residues 175–177 (DGK), Asp250, 256–257 (RK), Ala273, and Lys277 contribute to the ATP site. Asp250 provides a ligand contact to L-methionine. Position 281 (Lys281) interacts with L-methionine.

The protein belongs to the AdoMet synthase family. In terms of assembly, homotetramer; dimer of dimers. It depends on Mg(2+) as a cofactor. The cofactor is K(+).

The protein resides in the cytoplasm. The catalysed reaction is L-methionine + ATP + H2O = S-adenosyl-L-methionine + phosphate + diphosphate. It participates in amino-acid biosynthesis; S-adenosyl-L-methionine biosynthesis; S-adenosyl-L-methionine from L-methionine: step 1/1. Catalyzes the formation of S-adenosylmethionine (AdoMet) from methionine and ATP. The overall synthetic reaction is composed of two sequential steps, AdoMet formation and the subsequent tripolyphosphate hydrolysis which occurs prior to release of AdoMet from the enzyme. The protein is S-adenosylmethionine synthase of Brachyspira hyodysenteriae (strain ATCC 49526 / WA1).